We begin with the raw amino-acid sequence, 154 residues long: SsrA-binding protein (154 aa).

This sequence belongs to the SmpB family.

It is found in the cytoplasm. Functionally, required for rescue of stalled ribosomes mediated by trans-translation. Binds to transfer-messenger RNA (tmRNA), required for stable association of tmRNA with ribosomes. tmRNA and SmpB together mimic tRNA shape, replacing the anticodon stem-loop with SmpB. tmRNA is encoded by the ssrA gene; the 2 termini fold to resemble tRNA(Ala) and it encodes a 'tag peptide', a short internal open reading frame. During trans-translation Ala-aminoacylated tmRNA acts like a tRNA, entering the A-site of stalled ribosomes, displacing the stalled mRNA. The ribosome then switches to translate the ORF on the tmRNA; the nascent peptide is terminated with the 'tag peptide' encoded by the tmRNA and targeted for degradation. The ribosome is freed to recommence translation, which seems to be the essential function of trans-translation. The chain is SsrA-binding protein from Enterococcus hirae (strain ATCC 9790 / DSM 20160 / JCM 8729 / LMG 6399 / NBRC 3181 / NCIMB 6459 / NCDO 1258 / NCTC 12367 / WDCM 00089 / R).